Here is a 162-residue protein sequence, read N- to C-terminus: RNA pyrophosphohydrolase (162 aa).

The Nudix hydrolase domain maps to Lys7 to Glu149. The Nudix box signature appears at Gly40–Gly61.

This sequence belongs to the Nudix hydrolase family. RppH subfamily. Requires a divalent metal cation as cofactor.

Functionally, accelerates the degradation of transcripts by removing pyrophosphate from the 5'-end of triphosphorylated RNA, leading to a more labile monophosphorylated state that can stimulate subsequent ribonuclease cleavage. The polypeptide is RNA pyrophosphohydrolase (Wolbachia sp. subsp. Drosophila simulans (strain wRi)).